Here is a 369-residue protein sequence, read N- to C-terminus: UDP-N-acetylglucosamine--N-acetylmuramyl-(pentapeptide) pyrophosphoryl-undecaprenol N-acetylglucosamine transferase (369 aa).

Residues 10 to 12 (TGG), N124, R166, S196, and Q300 contribute to the UDP-N-acetyl-alpha-D-glucosamine site.

The protein belongs to the glycosyltransferase 28 family. MurG subfamily.

The protein localises to the cell membrane. It catalyses the reaction di-trans,octa-cis-undecaprenyl diphospho-N-acetyl-alpha-D-muramoyl-L-alanyl-D-glutamyl-meso-2,6-diaminopimeloyl-D-alanyl-D-alanine + UDP-N-acetyl-alpha-D-glucosamine = di-trans,octa-cis-undecaprenyl diphospho-[N-acetyl-alpha-D-glucosaminyl-(1-&gt;4)]-N-acetyl-alpha-D-muramoyl-L-alanyl-D-glutamyl-meso-2,6-diaminopimeloyl-D-alanyl-D-alanine + UDP + H(+). It participates in cell wall biogenesis; peptidoglycan biosynthesis. Functionally, cell wall formation. Catalyzes the transfer of a GlcNAc subunit on undecaprenyl-pyrophosphoryl-MurNAc-pentapeptide (lipid intermediate I) to form undecaprenyl-pyrophosphoryl-MurNAc-(pentapeptide)GlcNAc (lipid intermediate II). The sequence is that of UDP-N-acetylglucosamine--N-acetylmuramyl-(pentapeptide) pyrophosphoryl-undecaprenol N-acetylglucosamine transferase from Desulfitobacterium hafniense (strain DSM 10664 / DCB-2).